We begin with the raw amino-acid sequence, 109 residues long: Large ribosomal subunit protein uL22 (109 aa).

It belongs to the universal ribosomal protein uL22 family. In terms of assembly, part of the 50S ribosomal subunit.

In terms of biological role, this protein binds specifically to 23S rRNA; its binding is stimulated by other ribosomal proteins, e.g. L4, L17, and L20. It is important during the early stages of 50S assembly. It makes multiple contacts with different domains of the 23S rRNA in the assembled 50S subunit and ribosome. The globular domain of the protein is located near the polypeptide exit tunnel on the outside of the subunit, while an extended beta-hairpin is found that lines the wall of the exit tunnel in the center of the 70S ribosome. In Aromatoleum aromaticum (strain DSM 19018 / LMG 30748 / EbN1) (Azoarcus sp. (strain EbN1)), this protein is Large ribosomal subunit protein uL22.